A 457-amino-acid chain; its full sequence is Pup--protein ligase (457 aa).

Glu-9 serves as a coordination point for Mg(2+). An ATP-binding site is contributed by Arg-53. Residue Tyr-55 participates in Mg(2+) binding. The active-site Proton acceptor is the Asp-57. Position 63 (Glu-63) interacts with Mg(2+). ATP contacts are provided by Thr-66 and Trp-424.

It belongs to the Pup ligase/Pup deamidase family. Pup-conjugating enzyme subfamily.

The catalysed reaction is ATP + [prokaryotic ubiquitin-like protein]-L-glutamate + [protein]-L-lysine = ADP + phosphate + N(6)-([prokaryotic ubiquitin-like protein]-gamma-L-glutamyl)-[protein]-L-lysine.. It functions in the pathway protein degradation; proteasomal Pup-dependent pathway. The protein operates within protein modification; protein pupylation. Catalyzes the covalent attachment of the prokaryotic ubiquitin-like protein modifier Pup to the proteasomal substrate proteins, thereby targeting them for proteasomal degradation. This tagging system is termed pupylation. The ligation reaction involves the side-chain carboxylate of the C-terminal glutamate of Pup and the side-chain amino group of a substrate lysine. This chain is Pup--protein ligase, found in Xylanimonas cellulosilytica (strain DSM 15894 / JCM 12276 / CECT 5975 / KCTC 9989 / LMG 20990 / NBRC 107835 / XIL07).